Here is a 296-residue protein sequence, read N- to C-terminus: NAD kinase (296 aa).

D72 (proton acceptor) is an active-site residue. Residues 72–73, 146–147, R157, R174, D176, 187–192, and Q247 each bind NAD(+); these read DG, ND, and TAYALS.

The protein belongs to the NAD kinase family. It depends on a divalent metal cation as a cofactor.

It localises to the cytoplasm. The enzyme catalyses NAD(+) + ATP = ADP + NADP(+) + H(+). Its function is as follows. Involved in the regulation of the intracellular balance of NAD and NADP, and is a key enzyme in the biosynthesis of NADP. Catalyzes specifically the phosphorylation on 2'-hydroxyl of the adenosine moiety of NAD to yield NADP. In Hahella chejuensis (strain KCTC 2396), this protein is NAD kinase.